The sequence spans 64 residues: Putative neurotoxin-G (64 aa).

Residues M1–C19 form the signal peptide. 3 disulfides stabilise this stretch: C25–C45, C32–C54, and C36–C56.

In terms of tissue distribution, expressed by the venom gland.

Its subcellular location is the secreted. The chain is Putative neurotoxin-G from Lychas mucronatus (Chinese swimming scorpion).